The following is a 398-amino-acid chain: Pectate lyase 1 (398 aa).

The N-terminal stretch at 1 to 25 is a signal peptide; that stretch reads MGIKHCCYILYFTLALVTLLQPVRS. Asparagine 37 carries an N-linked (GlcNAc...) asparagine glycan. A disulfide bond links cysteine 55 and cysteine 72. Aspartate 195, aspartate 219, and aspartate 223 together coordinate Ca(2+). Arginine 275 is a catalytic residue.

This sequence belongs to the polysaccharide lyase 1 family. Amb a subfamily. Monomer. Requires Ca(2+) as cofactor. In terms of processing, the N-terminus is blocked. As to expression, pollen and flowers.

The catalysed reaction is Eliminative cleavage of (1-&gt;4)-alpha-D-galacturonan to give oligosaccharides with 4-deoxy-alpha-D-galact-4-enuronosyl groups at their non-reducing ends.. The protein operates within glycan metabolism; pectin degradation; 2-dehydro-3-deoxy-D-gluconate from pectin: step 2/5. Functionally, has pectate lyase activity. This is Pectate lyase 1 from Ambrosia artemisiifolia (Common ragweed).